Here is a 371-residue protein sequence, read N- to C-terminus: 4-hydroxyprotoasukamycin monooxygenase (371 aa).

The protein belongs to the bacterial luciferase oxidoreductase family. FMN serves as cofactor.

It catalyses the reaction 4-hydroxyprotoasukamycin + NADH + O2 + H(+) = asukamycin + NAD(+) + H2O. It functions in the pathway antibiotic biosynthesis. In terms of biological role, involved in the biosynthesis of the antibiotic asukamycin. Catalyzes the epoxidation of 4-hydroxyprotoasukamycin to the final product, asukamycin. Can also convert some 4-hydroxyprotoasukamycin derivatives to their asukamycin derivatives, but cannot use protoasukamycin as substrate. Can also use NADPH, but catalytic efficiency is 20-fold higher with NADH. The sequence is that of 4-hydroxyprotoasukamycin monooxygenase from Streptomyces nodosus subsp. asukaensis.